Reading from the N-terminus, the 413-residue chain is Na(+)-translocating NADH-quinone reductase subunit B (413 aa).

3 helical membrane-spanning segments follow: residues 55 to 75, 128 to 148, and 163 to 183; these read IMIMVWFAVFPAMFWGMYNAG, FLPIYATVFIVGGFWEVLFCM, and ILFALIVPPTLPLWQAALGIT. Threonine 235 is modified (FMN phosphoryl threonine). Helical transmembrane passes span 267 to 287, 296 to 316, 324 to 344, 357 to 377, and 380 to 400; these read IPGSIGEVSTLALMIGAAMIV, IIAGVMIGMIAVSTLFNVIGS, MPWHWHLVLGGFAFGMFFMAT, WWYGILIGAMCVMIRVVNPAY, and GMMLAILFANLFAPLFDHVVI.

It belongs to the NqrB/RnfD family. In terms of assembly, composed of six subunits; NqrA, NqrB, NqrC, NqrD, NqrE and NqrF. FMN serves as cofactor.

It is found in the cell inner membrane. The enzyme catalyses a ubiquinone + n Na(+)(in) + NADH + H(+) = a ubiquinol + n Na(+)(out) + NAD(+). NQR complex catalyzes the reduction of ubiquinone-1 to ubiquinol by two successive reactions, coupled with the transport of Na(+) ions from the cytoplasm to the periplasm. NqrA to NqrE are probably involved in the second step, the conversion of ubisemiquinone to ubiquinol. This chain is Na(+)-translocating NADH-quinone reductase subunit B, found in Vibrio campbellii (strain ATCC BAA-1116).